Consider the following 749-residue polypeptide: Phototropin (749 aa).

Residues 7 to 80 (PASQLTKVLA…QKIRDAIKKG (74 aa)) enclose the PAS 1 domain. Residues 56-61 (NCRFLQ), Arg-74, Asn-89, Asn-99, and Gln-120 contribute to the FMN site. Cys-57 is subject to S-4a-FMN cysteine. The PAC 1 domain maps to 81 to 135 (EACSVRLLNYRKDGTPFWNLLTVTPIKTPDGRVSKFVGVQVDVTSKTEGKALADN). Residues 200–273 (VALDLATTVE…DQIRAAIKEG (74 aa)) enclose the PAS 2 domain. The PAC 2 domain occupies 274 to 328 (SELTVRILNYTKAGKAFWNMFTLAPMRDQDGHARFFVGVQVDVTAQSTSPDKAPV). The region spanning 404-712 (FRRVKQLGAG…ANEIKSHPWF (309 aa)) is the Protein kinase domain. ATP-binding positions include 410–418 (LGAGDVGLV) and Lys-433. Catalysis depends on Asp-529, which acts as the Proton acceptor. Disordered stretches follow at residues 563 to 591 (KIGG…SSSG) and 729 to 749 (PRRA…FDNY). One can recognise an AGC-kinase C-terminal domain in the interval 713 to 749 (KGINWALLRHQQPPYVPRRASKAAGGSSTGGAAFDNY). Positions 734–749 (KAAGGSSTGGAAFDNY) are enriched in low complexity.

The protein belongs to the protein kinase superfamily. AGC Ser/Thr protein kinase family. FMN serves as cofactor. Autophosphorylated in response to blue light irradiation. Post-translationally, 2 molecules of FMN bind covalently to cysteines after exposure to blue light and are reversed in the dark. In terms of tissue distribution, expressed in gametes, pre-gametes and gametes generated by pre-gametes (at protein level).

The protein localises to the membrane. It carries out the reaction L-seryl-[protein] + ATP = O-phospho-L-seryl-[protein] + ADP + H(+). The enzyme catalyses L-threonyl-[protein] + ATP = O-phospho-L-threonyl-[protein] + ADP + H(+). Protein kinase that acts as a blue light photoreceptor. Required for non-photochemical quenching (NPQ), a mechanism that converts and dissipates the harmful excess absorbed light energy into heat and protect the photosynthetic apparatus from photo-oxidative damage. Controls the energy-dependent chlorophyll fluorescence quenching (qE) activity of chlorophyll excited states by inducing the expression of the qE effector protein LHCSR3 in high light intensities. This is Phototropin from Chlamydomonas reinhardtii (Chlamydomonas smithii).